The chain runs to 181 residues: 3-hydroxyanthranilate 3,4-dioxygenase (181 aa).

Arg46 is an O2 binding site. His50, Glu56, and His95 together coordinate Fe cation. A substrate-binding site is contributed by Glu56. Arg99 and Glu109 together coordinate substrate.

Belongs to the 3-HAO family. Requires Fe(2+) as cofactor.

The protein localises to the cytoplasm. The catalysed reaction is 3-hydroxyanthranilate + O2 = (2Z,4Z)-2-amino-3-carboxymuconate 6-semialdehyde. It participates in cofactor biosynthesis; NAD(+) biosynthesis; quinolinate from L-kynurenine: step 3/3. Its function is as follows. Catalyzes the oxidative ring opening of 3-hydroxyanthranilate to 2-amino-3-carboxymuconate semialdehyde, which spontaneously cyclizes to quinolinate. The sequence is that of 3-hydroxyanthranilate 3,4-dioxygenase from Mycosarcoma maydis (Corn smut fungus).